The following is a 150-amino-acid chain: Macrodomain Ter protein (150 aa).

Belongs to the MatP family. Homodimer.

The protein resides in the cytoplasm. Required for spatial organization of the terminus region of the chromosome (Ter macrodomain) during the cell cycle. Prevents early segregation of duplicated Ter macrodomains during cell division. Binds specifically to matS, which is a 13 bp signature motif repeated within the Ter macrodomain. The chain is Macrodomain Ter protein from Klebsiella pneumoniae (strain 342).